Here is a 130-residue protein sequence, read N- to C-terminus: Small ribosomal subunit protein uS11 (130 aa).

This sequence belongs to the universal ribosomal protein uS11 family. As to quaternary structure, part of the 30S ribosomal subunit. Interacts with proteins S7 and S18. Binds to IF-3.

Its function is as follows. Located on the platform of the 30S subunit, it bridges several disparate RNA helices of the 16S rRNA. Forms part of the Shine-Dalgarno cleft in the 70S ribosome. This Thermosynechococcus vestitus (strain NIES-2133 / IAM M-273 / BP-1) protein is Small ribosomal subunit protein uS11.